The primary structure comprises 168 residues: Desumoylating isopeptidase 1 (168 aa).

The PPPDE domain occupies 7 to 149 (YPVKLYVYDL…FGQALRPFLD (143 aa)). Residue His38 is part of the active site. The Nuclear export signal 1 signature appears at 83 to 91 (IFLEYLSSL). Cys108 is an active-site residue. The Nuclear export signal 2 motif lies at 139–153 (PFGQALRPFLDSIQI).

Belongs to the DeSI family. As to quaternary structure, homodimer. Interacts with UBQLN4; leading to the export of UBQLN4 from the nucleus.

The protein localises to the cytoplasm. It is found in the nucleus. It catalyses the reaction S-hexadecanoyl-L-cysteinyl-[protein] + H2O = L-cysteinyl-[protein] + hexadecanoate + H(+). Functionally, protease which deconjugates SUMO1, SUMO2 and SUMO3 from some substrate proteins. Has isopeptidase but not SUMO-processing activity. Desumoylates ZBTB46. Collaborates with UBQLN4 in the export of ubiquitinated proteins from the nucleus to the cytoplasm. Exhibits palmitoyl protein thioesterase (S-depalmitoylation) activity towards synthetic substrates 4-methylumbelliferyl-6-S-palmitoyl-beta-D-glucopyranoside and S-depalmitoylation probe 5 (DPP-5). The chain is Desumoylating isopeptidase 1 (Desi1) from Rattus norvegicus (Rat).